A 469-amino-acid chain; its full sequence is Ribulose bisphosphate carboxylase large chain (469 aa).

Lysine 5 carries the N6,N6,N6-trimethyllysine modification. Residues asparagine 114 and threonine 164 each contribute to the substrate site. Lysine 166 functions as the Proton acceptor in the catalytic mechanism. Lysine 168 is a substrate binding site. Positions 192, 194, and 195 each coordinate Mg(2+). Lysine 192 bears the N6-carboxylysine mark. The Proton acceptor role is filled by histidine 285. Residues arginine 286, histidine 318, and serine 370 each coordinate substrate.

The protein belongs to the RuBisCO large chain family. Type I subfamily. As to quaternary structure, heterohexadecamer of 8 large chains and 8 small chains; disulfide-linked. The disulfide link is formed within the large subunit homodimers. Mg(2+) serves as cofactor. The disulfide bond which can form in the large chain dimeric partners within the hexadecamer appears to be associated with oxidative stress and protein turnover.

It localises to the plastid. The protein localises to the chloroplast. The catalysed reaction is 2 (2R)-3-phosphoglycerate + 2 H(+) = D-ribulose 1,5-bisphosphate + CO2 + H2O. It carries out the reaction D-ribulose 1,5-bisphosphate + O2 = 2-phosphoglycolate + (2R)-3-phosphoglycerate + 2 H(+). Functionally, ruBisCO catalyzes two reactions: the carboxylation of D-ribulose 1,5-bisphosphate, the primary event in carbon dioxide fixation, as well as the oxidative fragmentation of the pentose substrate in the photorespiration process. Both reactions occur simultaneously and in competition at the same active site. The polypeptide is Ribulose bisphosphate carboxylase large chain (Antirhea lucida (Palo iloron)).